Consider the following 476-residue polypeptide: Serine/threonine-protein kinase Chk1 (476 aa).

The segment at 1-265 is interaction with CLSPN; sequence MAVPFVEDWD…IPDIKKDRWY (265 aa). The Protein kinase domain occupies 9–265; sequence WDLVQTLGEG…IPDIKKDRWY (257 aa). ATP is bound by residues 15-23 and Lys38; that span reads LGEGAYGEV. Asp130 functions as the Proton acceptor in the catalytic mechanism. A Glycyl lysine isopeptide (Lys-Gly) (interchain with G-Cter in ubiquitin) cross-link involves residue Lys132. Residues 267 to 329 are disordered; that stretch reads KPLNRGAKRP…EPRTGLSLWD (63 aa). Position 280 is a phosphoserine; by PKB/AKT1 (Ser280). Over residues 280–291 the composition is skewed to low complexity; sequence SGGMSESSSGFS. 3 positions are modified to phosphoserine: Ser286, Ser296, and Ser301. Residues 298-320 are compositionally biased toward polar residues; sequence LDFSPINSGSSEENVKFSSSQPE. Ser317 and Ser345 each carry phosphoserine; by ATM and ATR. Positions 391 to 476 are autoinhibitory region; the sequence is QCLKETFEKL…SSQKVWFPVT (86 aa). Lys436 participates in a covalent cross-link: Glycyl lysine isopeptide (Lys-Gly) (interchain with G-Cter in ubiquitin). 3 positions are modified to phosphoserine: Ser463, Ser467, and Ser468.

This sequence belongs to the protein kinase superfamily. CAMK Ser/Thr protein kinase family. NIM1 subfamily. In terms of assembly, interacts (phosphorylated by ATR) with RAD51. Interacts with and phosphorylates CLSPN, an adapter protein that regulates the ATR-dependent phosphorylation of CHEK1. Interacts with BRCA1. Interacts with and phosphorylates CDC25A, CDC25B and CDC25C. Interacts with FBXO6, which regulates CHEK1. Interacts with PPM1D, which regulates CHEK1 through dephosphorylation. Interacts with TIMELESS; DNA damage-dependent. Interacts with FEM1B; activates CHEK1 in response to stress. Interacts with TLK1. Interacts with XPO1 and YWHAZ. Interacts with CDK5RAP3; antagonizes CHEK1. Post-translationally, phosphorylated by ATR in a RAD17-dependent manner in response to ultraviolet irradiation and inhibition of DNA replication. Phosphorylated by ATM in response to ionizing irradiation. ATM and ATR can both phosphorylate Ser-317 and Ser-345 and this results in enhanced kinase activity. Phosphorylation at Ser-345 induces a change in the conformation of the protein, activates the kinase activity and is a prerequisite for interaction with FBXO6 and subsequent ubiquitination at Lys-436. Phosphorylation at Ser-345 also increases binding to 14-3-3 proteins and promotes nuclear retention. Conversely, dephosphorylation at Ser-345 by PPM1D may contribute to exit from checkpoint mediated cell cycle arrest. Phosphorylation at Ser-280 by AKT1/PKB, may promote mono and/or diubiquitination. Also phosphorylated at undefined residues during mitotic arrest, resulting in decreased activity. In terms of processing, ubiquitinated. Mono or diubiquitination promotes nuclear exclusion. The activated form (phosphorylated on Ser-345) is polyubiquitinated at Lys-436 by some SCF-type E3 ubiquitin ligase complex containing FBXO6 promoting its degradation. Ubiquitination and degradation are required to terminate the checkpoint and ensure that activated CHEK1 does not accumulate as cells progress through S phase, when replication forks encounter transient impediments during normal DNA replication. 'Lys-63'-mediated ubiquitination by TRAF4 at Lys-132 activates cell cycle arrest and activation of DNA repair. Proteolytically cleaved at the C-terminus by SPRTN during normal DNA replication, thereby promoting CHEK1 removal from chromatin and activating the protein kinase activity. In terms of tissue distribution, expressed in brain, heart, liver, lung, skeletal muscle, spleen and testis. Expressed only in liver.

It is found in the nucleus. Its subcellular location is the chromosome. The protein resides in the cytoplasm. The protein localises to the cytoskeleton. It localises to the microtubule organizing center. It is found in the centrosome. It carries out the reaction L-seryl-[protein] + ATP = O-phospho-L-seryl-[protein] + ADP + H(+). The catalysed reaction is L-threonyl-[protein] + ATP = O-phospho-L-threonyl-[protein] + ADP + H(+). With respect to regulation, activated through phosphorylation predominantly by ATR but also by ATM in response to DNA damage or inhibition of DNA replication. Activation is modulated by several mediators including CLSPN, BRCA1 and FEM1B. Proteolytic cleavage at the C-terminus by SPRTN during normal DNA replication activates the protein kinase activity. Its function is as follows. Serine/threonine-protein kinase which is required for checkpoint-mediated cell cycle arrest and activation of DNA repair in response to the presence of DNA damage or unreplicated DNA. May also negatively regulate cell cycle progression during unperturbed cell cycles. This regulation is achieved by a number of mechanisms that together help to preserve the integrity of the genome. Recognizes the substrate consensus sequence [R-X-X-S/T]. Binds to and phosphorylates CDC25A, CDC25B and CDC25C. Phosphorylation of CDC25A at 'Ser-178' and 'Thr-507' and phosphorylation of CDC25C at 'Ser-216' creates binding sites for 14-3-3 proteins which inhibit CDC25A and CDC25C. Phosphorylation of CDC25A at 'Ser-76', 'Ser-124', 'Ser-178', 'Ser-279' and 'Ser-293' promotes proteolysis of CDC25A. Phosphorylation of CDC25A at 'Ser-76' primes the protein for subsequent phosphorylation at 'Ser-79', 'Ser-82' and 'Ser-88' by NEK11, which is required for polyubiquitination and degradation of CDCD25A. Inhibition of CDC25 leads to increased inhibitory tyrosine phosphorylation of CDK-cyclin complexes and blocks cell cycle progression. Also phosphorylates NEK6. Binds to and phosphorylates RAD51 at 'Thr-309', which promotes the release of RAD51 from BRCA2 and enhances the association of RAD51 with chromatin, thereby promoting DNA repair by homologous recombination. Phosphorylates multiple sites within the C-terminus of TP53, which promotes activation of TP53 by acetylation and promotes cell cycle arrest and suppression of cellular proliferation. Also promotes repair of DNA cross-links through phosphorylation of FANCE. Binds to and phosphorylates TLK1 at 'Ser-743', which prevents the TLK1-dependent phosphorylation of the chromatin assembly factor ASF1A. This may enhance chromatin assembly both in the presence or absence of DNA damage. May also play a role in replication fork maintenance through regulation of PCNA. May regulate the transcription of genes that regulate cell-cycle progression through the phosphorylation of histones. Phosphorylates histone H3.1 (to form H3T11ph), which leads to epigenetic inhibition of a subset of genes. May also phosphorylate RB1 to promote its interaction with the E2F family of transcription factors and subsequent cell cycle arrest. Phosphorylates SPRTN, promoting SPRTN recruitment to chromatin. Reduces replication stress and activates the G2/M checkpoint, by phosphorylating and inactivating PABIR1/FAM122A and promoting the serine/threonine-protein phosphatase 2A-mediated dephosphorylation and stabilization of WEE1 levels and activity. The sequence is that of Serine/threonine-protein kinase Chk1 (Chek1) from Rattus norvegicus (Rat).